Here is a 290-residue protein sequence, read N- to C-terminus: Ubiquinone biosynthesis protein COQ4, mitochondrial (290 aa).

A mitochondrion-targeting transit peptide spans M1 to F32. The Zn(2+) site is built by H168, D169, H172, and E184. The tract at residues K260–V290 is disordered.

It belongs to the COQ4 family. In terms of assembly, component of a multi-subunit COQ enzyme complex, composed of at least COQ3, COQ4, COQ5, COQ6, COQ7 and COQ9. Zn(2+) serves as cofactor.

The protein localises to the mitochondrion inner membrane. It catalyses the reaction a 4-hydroxy-3-methoxy-5-(all-trans-polyprenyl)benzoate + H(+) = a 2-methoxy-6-(all-trans-polyprenyl)phenol + CO2. The protein operates within cofactor biosynthesis; ubiquinone biosynthesis. Functionally, lyase that catalyzes the C1-decarboxylation of 4-hydroxy-3-methoxy-5-(all-trans-polyprenyl)benzoic acid into 2-methoxy-6-(all-trans-polyprenyl)phenol during ubiquinone biosynthesis. This chain is Ubiquinone biosynthesis protein COQ4, mitochondrial, found in Phaeosphaeria nodorum (strain SN15 / ATCC MYA-4574 / FGSC 10173) (Glume blotch fungus).